Reading from the N-terminus, the 796-residue chain is Peroxisome proliferator-activated receptor gamma coactivator 1-alpha (796 aa).

N6-acetyllysine is present on Lys77. A disordered region spans residues 98-138; sequence PVDEDGLPSFDALTDGDVTTENEASPSSMPDGTPPPQEAEE. Over residues 114 to 127 the composition is skewed to polar residues; it reads DVTTENEASPSSMP. The LXXLL motif signature appears at 142–146; the sequence is LKKLL. Lys144 carries the post-translational modification N6-acetyllysine. Thr176 is modified (phosphothreonine; by AMPK). Position 182 is an N6-acetyllysine (Lys182). A disordered region spans residues 211 to 275; it reads YLTTNDDPPH…NDPKGSPFEN (65 aa). Basic and acidic residues predominate over residues 217 to 235; that stretch reads DPPHTKPTENRNSSRDKCT. Positions 242–258 are enriched in polar residues; it reads TQSQTQHLQAKPTTLSL. An N6-acetyllysine mark is found at Lys252, Lys269, Lys276, and Lys319. Disordered regions lie at residues 288-374 and 398-452; these read GTAG…AKRP and TSQE…RKQL. An interaction with PPARG region spans residues 291-337; it reads GLTPPTTPPHKANQDNPFRASPKLKPSCKTVVPPPSKKARYSESSCT. A compositionally biased stretch (polar residues) spans 332–344; sequence SESSCTQGSNSTK. N6-acetyllysine occurs at positions 345 and 411. Residues 348–796 form a mediates interaction with RNF34 region; it reads EQSELYAQLS…LKEAQRSLRR (449 aa). A compositionally biased stretch (basic and acidic residues) spans 401–412; sequence ELHDSRQLENKD. Composition is skewed to polar residues over residues 413–428 and 439–450; these read APSS…STDS and VSRQVSPGSTRK. Lys450 carries the post-translational modification N6-acetyllysine. Ser538 carries the post-translational modification Phosphoserine; by AMPK. 3 disordered regions span residues 542–597, 609–637, and 648–667; these read FNSP…SSSR, HRTH…SYEE, and YRRE…ERQR. The segment covering 562–577 has biased composition (basic residues); it reads QRMRSRSRSFSRHRSC. Residues 578-597 are compositionally biased toward low complexity; it reads SRSPYSRSRSRSPGSRSSSR. The RRM domain occupies 675-751; sequence RVIYVGKIRP…TDFELYFCGR (77 aa). N6-acetyllysine is present on residues Lys756 and Lys777.

Homooligomer. Interacts with MYBBP1A; inhibits MYBBP1A transcriptional activation. Interacts with PRDM16, LPIN1 and PML. Interacts (via LXXLL motif) with RORA and RORC (via AF-2 motif); activates RORA and RORC transcriptional activation. Interacts with LRPPRC. Interacts with FOXO1. Interacts with NR5A2. Post-translationally, phosphorylation by AMPK in skeletal muscle increases activation of its own promoter. Phosphorylated by CLK2. In terms of processing, heavily acetylated by KAT2A/GCN5 under conditions of high nutrients, leading to inactivation of PPARGC1A. Deacetylated by SIRT1 in low nutrients/high NAD conditions, leading to its activation. Ubiquitinated. Ubiquitination by RNF34 induces proteasomal degradation.

It is found in the nucleus. It localises to the PML body. In terms of biological role, transcriptional coactivator for steroid receptors and nuclear receptors. Greatly increases the transcriptional activity of PPARG and thyroid hormone receptor on the uncoupling protein promoter. Can regulate key mitochondrial genes that contribute to the program of adaptive thermogenesis. Plays an essential role in metabolic reprogramming in response to dietary availability through coordination of the expression of a wide array of genes involved in glucose and fatty acid metabolism. Acts as a key regulator of gluconeogenesis: stimulates hepatic gluconeogenesis by increasing the expression of gluconeogenic enzymes, and acting together with FOXO1 to promote the fasting gluconeogenic program. Induces the expression of PERM1 in the skeletal muscle in an ESRRA-dependent manner. Also involved in the integration of the circadian rhythms and energy metabolism. Required for oscillatory expression of clock genes, such as BMAL1 and NR1D1, through the coactivation of RORA and RORC, and metabolic genes, such as PDK4 and PEPCK. The sequence is that of Peroxisome proliferator-activated receptor gamma coactivator 1-alpha (PPARGC1A) from Bos taurus (Bovine).